We begin with the raw amino-acid sequence, 131 residues long: MARQPTKKSGSKKQKRNVPNGMAYIQSTFNNSIVTITDQNGDVISWASAGSSGFKGAKKGTPFAAQTAAESAARRAIDQGMRQIEVMVSGPGAGRETAIRALQGAGLEITLIRDITPIPHNGCRPPKRRRV.

The protein belongs to the universal ribosomal protein uS11 family. Part of the 30S ribosomal subunit. Interacts with proteins S7 and S18. Binds to IF-3.

Functionally, located on the platform of the 30S subunit, it bridges several disparate RNA helices of the 16S rRNA. Forms part of the Shine-Dalgarno cleft in the 70S ribosome. In Trichormus variabilis (strain ATCC 29413 / PCC 7937) (Anabaena variabilis), this protein is Small ribosomal subunit protein uS11.